The chain runs to 477 residues: Bifunctional protein HldE (477 aa).

Positions 1 to 318 (MKVNLPAFER…ENAVRGRADT (318 aa)) are ribokinase. 195 to 198 (NLSE) serves as a coordination point for ATP. Asp264 is an active-site residue. A cytidylyltransferase region spans residues 344 to 477 (MTNGVFDILH…IKKIQTESEK (134 aa)).

It in the N-terminal section; belongs to the carbohydrate kinase PfkB family. The protein in the C-terminal section; belongs to the cytidylyltransferase family. As to quaternary structure, homodimer.

The catalysed reaction is D-glycero-beta-D-manno-heptose 7-phosphate + ATP = D-glycero-beta-D-manno-heptose 1,7-bisphosphate + ADP + H(+). It carries out the reaction D-glycero-beta-D-manno-heptose 1-phosphate + ATP + H(+) = ADP-D-glycero-beta-D-manno-heptose + diphosphate. The protein operates within nucleotide-sugar biosynthesis; ADP-L-glycero-beta-D-manno-heptose biosynthesis; ADP-L-glycero-beta-D-manno-heptose from D-glycero-beta-D-manno-heptose 7-phosphate: step 1/4. It functions in the pathway nucleotide-sugar biosynthesis; ADP-L-glycero-beta-D-manno-heptose biosynthesis; ADP-L-glycero-beta-D-manno-heptose from D-glycero-beta-D-manno-heptose 7-phosphate: step 3/4. Catalyzes the phosphorylation of D-glycero-D-manno-heptose 7-phosphate at the C-1 position to selectively form D-glycero-beta-D-manno-heptose-1,7-bisphosphate. Functionally, catalyzes the ADP transfer from ATP to D-glycero-beta-D-manno-heptose 1-phosphate, yielding ADP-D-glycero-beta-D-manno-heptose. In Salmonella agona (strain SL483), this protein is Bifunctional protein HldE.